The sequence spans 101 residues: Small ribosomal subunit protein uS14 (101 aa).

This sequence belongs to the universal ribosomal protein uS14 family. In terms of assembly, part of the 30S ribosomal subunit. Contacts proteins S3 and S10.

Functionally, binds 16S rRNA, required for the assembly of 30S particles and may also be responsible for determining the conformation of the 16S rRNA at the A site. The polypeptide is Small ribosomal subunit protein uS14 (Janthinobacterium sp. (strain Marseille) (Minibacterium massiliensis)).